Consider the following 366-residue polypeptide: Protein-methionine-sulfoxide reductase catalytic subunit MsrP (366 aa).

Low complexity predominate over residues 1–22 (MHNTFTHTKNNTHTKNNTQAKN). The segment at 1-40 (MHNTFTHTKNNTHTKNNTQAKNSGSQTKSNAVSLNKPRKL) is disordered. Positions 1–76 (MHNTFTHTKN…TLALPASAQA (76 aa)) form a signal peptide, tat-type signal. Residues 23–33 (SGSQTKSNAVS) show a composition bias toward polar residues. Mo-molybdopterin-binding positions include N120, 123 to 124 (YE), C178, T213, N265, R270, and 281 to 283 (SIK).

Belongs to the MsrP family. Heterodimer of a catalytic subunit (MsrP) and a heme-binding subunit (MsrQ). Mo-molybdopterin is required as a cofactor. Post-translationally, predicted to be exported by the Tat system. The position of the signal peptide cleavage has not been experimentally proven.

The protein resides in the periplasm. It carries out the reaction L-methionyl-[protein] + a quinone + H2O = L-methionyl-(S)-S-oxide-[protein] + a quinol. It catalyses the reaction L-methionyl-[protein] + a quinone + H2O = L-methionyl-(R)-S-oxide-[protein] + a quinol. Part of the MsrPQ system that repairs oxidized periplasmic proteins containing methionine sulfoxide residues (Met-O), using respiratory chain electrons. Thus protects these proteins from oxidative-stress damage caused by reactive species of oxygen and chlorine generated by the host defense mechanisms. MsrPQ is essential for the maintenance of envelope integrity under bleach stress, rescuing a wide series of structurally unrelated periplasmic proteins from methionine oxidation. The catalytic subunit MsrP is non-stereospecific, being able to reduce both (R-) and (S-) diastereoisomers of methionine sulfoxide. The polypeptide is Protein-methionine-sulfoxide reductase catalytic subunit MsrP (Yersinia pestis).